A 381-amino-acid chain; its full sequence is Acetylornithine deacetylase (381 aa).

His-79 lines the Zn(2+) pocket. The active site involves Asp-81. Asp-111 lines the Zn(2+) pocket. Residue Glu-143 is part of the active site. Residues Glu-144, Glu-168, and His-354 each coordinate Zn(2+).

It belongs to the peptidase M20A family. ArgE subfamily. As to quaternary structure, homodimer. Requires Zn(2+) as cofactor. It depends on Co(2+) as a cofactor. Glutathione serves as cofactor.

Its subcellular location is the cytoplasm. It carries out the reaction N(2)-acetyl-L-ornithine + H2O = L-ornithine + acetate. The protein operates within amino-acid biosynthesis; L-arginine biosynthesis; L-ornithine from N(2)-acetyl-L-ornithine (linear): step 1/1. Functionally, catalyzes the hydrolysis of the amide bond of N(2)-acetylated L-amino acids. Cleaves the acetyl group from N-acetyl-L-ornithine to form L-ornithine, an intermediate in L-arginine biosynthesis pathway, and a branchpoint in the synthesis of polyamines. The chain is Acetylornithine deacetylase from Buchnera aphidicola subsp. Acyrthosiphon pisum (strain 5A).